A 367-amino-acid chain; its full sequence is uncharacterized protein (367 aa).

This sequence belongs to the Gfo/Idh/MocA family.

This is an uncharacterized protein from Streptococcus pneumoniae serotype 4 (strain ATCC BAA-334 / TIGR4).